The chain runs to 130 residues: Small ribosomal subunit protein uS8 (130 aa).

It belongs to the universal ribosomal protein uS8 family. As to quaternary structure, part of the 30S ribosomal subunit.

In terms of biological role, one of the primary rRNA binding proteins, it binds directly to 16S rRNA central domain where it helps coordinate assembly of the platform of the 30S subunit. In Methanosphaerula palustris (strain ATCC BAA-1556 / DSM 19958 / E1-9c), this protein is Small ribosomal subunit protein uS8.